The primary structure comprises 219 residues: Holliday junction branch migration complex subunit RuvA (219 aa).

A domain I region spans residues 1 to 67 (MIGWLRGERI…DDGSSLFGFP (67 aa)). The tract at residues 68-146 (DRRERDLFRV…AWSAEKNSDH (79 aa)) is domain II. Residues 147 to 161 (SDLSLVDRSDLKSLP) are flexible linker. The segment at 162–219 (IEPDPLQDLQLTLSTLGYEDLEIRRAMRAVATGEEVPAANDGDGWLRASLRWLNRPSA) is domain III.

Belongs to the RuvA family. In terms of assembly, homotetramer. Forms an RuvA(8)-RuvB(12)-Holliday junction (HJ) complex. HJ DNA is sandwiched between 2 RuvA tetramers; dsDNA enters through RuvA and exits via RuvB. An RuvB hexamer assembles on each DNA strand where it exits the tetramer. Each RuvB hexamer is contacted by two RuvA subunits (via domain III) on 2 adjacent RuvB subunits; this complex drives branch migration. In the full resolvosome a probable DNA-RuvA(4)-RuvB(12)-RuvC(2) complex forms which resolves the HJ.

It localises to the cytoplasm. Its function is as follows. The RuvA-RuvB-RuvC complex processes Holliday junction (HJ) DNA during genetic recombination and DNA repair, while the RuvA-RuvB complex plays an important role in the rescue of blocked DNA replication forks via replication fork reversal (RFR). RuvA specifically binds to HJ cruciform DNA, conferring on it an open structure. The RuvB hexamer acts as an ATP-dependent pump, pulling dsDNA into and through the RuvAB complex. HJ branch migration allows RuvC to scan DNA until it finds its consensus sequence, where it cleaves and resolves the cruciform DNA. In Synechococcus sp. (strain CC9311), this protein is Holliday junction branch migration complex subunit RuvA.